A 225-amino-acid polypeptide reads, in one-letter code: uncharacterized protein (225 aa).

This is an uncharacterized protein from Dictyostelium discoideum (Social amoeba).